Consider the following 188-residue polypeptide: Inner kinetochore subunit cnl2 (188 aa).

This sequence belongs to the NKP2 family. Component of the inner kinetochore constitutive centromere-associated network (CCAN) (also known as central kinetochore Sim4 complex in fission yeast), which is composed of at least cnl2, cnp3, cnp20, fta1, fta2, fta3, fta4, fta6, fta7, mal2, mhf1, mhf2, mis6, mis15, mis17, sim4 and wip1.

It is found in the cytoplasm. The protein resides in the nucleus. The protein localises to the chromosome. It localises to the centromere. Its subcellular location is the kinetochore. In terms of biological role, component of the kinetochore, a multiprotein complex that assembles on centromeric DNA and attaches chromosomes to spindle microtubules, mediating chromosome segregation and sister chromatid segregation during meiosis and mitosis. Component of the inner kinetochore constitutive centromere-associated network (CCAN), which serves as a structural platform for outer kinetochore assembly. This chain is Inner kinetochore subunit cnl2 (cnl2), found in Schizosaccharomyces pombe (strain 972 / ATCC 24843) (Fission yeast).